Here is a 66-residue protein sequence, read N- to C-terminus: Large ribosomal subunit protein uL29 (66 aa).

The protein belongs to the universal ribosomal protein uL29 family.

This Deinococcus deserti (strain DSM 17065 / CIP 109153 / LMG 22923 / VCD115) protein is Large ribosomal subunit protein uL29.